The primary structure comprises 333 residues: Quinolinate synthase (333 aa).

Positions 41 and 58 each coordinate iminosuccinate. Cysteine 103 provides a ligand contact to [4Fe-4S] cluster. Iminosuccinate-binding positions include 129–131 (YIN) and serine 146. Position 189 (cysteine 189) interacts with [4Fe-4S] cluster. Residues 215-217 (HPE) and threonine 232 contribute to the iminosuccinate site. Residue cysteine 282 coordinates [4Fe-4S] cluster.

The protein belongs to the quinolinate synthase family. Type 2 subfamily. The cofactor is [4Fe-4S] cluster.

It is found in the cytoplasm. It carries out the reaction iminosuccinate + dihydroxyacetone phosphate = quinolinate + phosphate + 2 H2O + H(+). Its pathway is cofactor biosynthesis; NAD(+) biosynthesis; quinolinate from iminoaspartate: step 1/1. In terms of biological role, catalyzes the condensation of iminoaspartate with dihydroxyacetone phosphate to form quinolinate. The sequence is that of Quinolinate synthase from Prochlorococcus marinus (strain MIT 9303).